Reading from the N-terminus, the 113-residue chain is Outer membrane protein assembly factor BamE (113 aa).

A signal peptide spans 1–19 (MRCKTLTAAAAVLLMLTAG). The N-palmitoyl cysteine moiety is linked to residue Cys-20. Cys-20 is lipidated: S-diacylglycerol cysteine.

It belongs to the BamE family. Part of the Bam complex, which is composed of the outer membrane protein BamA, and four lipoproteins BamB, BamC, BamD and BamE.

Its subcellular location is the cell outer membrane. Part of the outer membrane protein assembly complex, which is involved in assembly and insertion of beta-barrel proteins into the outer membrane. This is Outer membrane protein assembly factor BamE from Escherichia coli O6:H1 (strain CFT073 / ATCC 700928 / UPEC).